A 360-amino-acid polypeptide reads, in one-letter code: Phenylalanine--tRNA ligase alpha subunit (360 aa).

Glu-260 provides a ligand contact to Mg(2+).

Belongs to the class-II aminoacyl-tRNA synthetase family. Phe-tRNA synthetase alpha subunit type 1 subfamily. Tetramer of two alpha and two beta subunits. The cofactor is Mg(2+).

It is found in the cytoplasm. It carries out the reaction tRNA(Phe) + L-phenylalanine + ATP = L-phenylalanyl-tRNA(Phe) + AMP + diphosphate + H(+). The chain is Phenylalanine--tRNA ligase alpha subunit from Methylobacterium nodulans (strain LMG 21967 / CNCM I-2342 / ORS 2060).